Reading from the N-terminus, the 319-residue chain is Ribosomal RNA small subunit methyltransferase H (319 aa).

S-adenosyl-L-methionine is bound by residues 39–41, Asp-59, Phe-83, Asp-104, and Gln-111; that span reads GGH.

This sequence belongs to the methyltransferase superfamily. RsmH family.

The protein localises to the cytoplasm. It catalyses the reaction cytidine(1402) in 16S rRNA + S-adenosyl-L-methionine = N(4)-methylcytidine(1402) in 16S rRNA + S-adenosyl-L-homocysteine + H(+). Specifically methylates the N4 position of cytidine in position 1402 (C1402) of 16S rRNA. This chain is Ribosomal RNA small subunit methyltransferase H, found in Ralstonia nicotianae (strain ATCC BAA-1114 / GMI1000) (Ralstonia solanacearum).